Here is an 870-residue protein sequence, read N- to C-terminus: LPS-assembly protein LptD (870 aa).

An N-terminal signal peptide occupies residues 1-25 (MKQGKSFIFYCLVLLLCGFQQLSSA).

It belongs to the LptD family. As to quaternary structure, component of the lipopolysaccharide transport and assembly complex. Interacts with LptE and LptA.

The protein localises to the cell outer membrane. Functionally, together with LptE, is involved in the assembly of lipopolysaccharide (LPS) at the surface of the outer membrane. The chain is LPS-assembly protein LptD from Coxiella burnetii (strain RSA 493 / Nine Mile phase I).